We begin with the raw amino-acid sequence, 432 residues long: Glutamate-1-semialdehyde 2,1-aminomutase (432 aa).

Lys-272 is subject to N6-(pyridoxal phosphate)lysine.

The protein belongs to the class-III pyridoxal-phosphate-dependent aminotransferase family. HemL subfamily. Homodimer. Requires pyridoxal 5'-phosphate as cofactor.

It is found in the cytoplasm. It carries out the reaction (S)-4-amino-5-oxopentanoate = 5-aminolevulinate. It participates in porphyrin-containing compound metabolism; protoporphyrin-IX biosynthesis; 5-aminolevulinate from L-glutamyl-tRNA(Glu): step 2/2. Its pathway is porphyrin-containing compound metabolism; chlorophyll biosynthesis. In Cyanothece sp. (strain PCC 7425 / ATCC 29141), this protein is Glutamate-1-semialdehyde 2,1-aminomutase.